Consider the following 223-residue polypeptide: Golgi to ER traffic protein 1 (223 aa).

Residue M1 is a topological domain, lumenal. Residues 2–21 (SWVVAIAVVFVVVLKVLEYS) traverse the membrane as a helical segment. Residues 22 to 105 (TSYHDLVLQS…QIKGHLKKVK (84 aa)) lie on the Cytoplasmic side of the membrane. Positions 56 to 105 (ENKSISAQDNYAKWTKNNRKLDKLDKEITELGAQLKAHNEQIKGHLKKVK) form a coiled coil. The helical transmembrane segment at 106–126 (LLLLTVPFLCFKLWKGKHIVY) threads the bilayer. The Lumenal segment spans residues 127 to 177 (NLPHHQMFPQLVAGVWSQGWLYLAILPLQLAKSIVTGSSFAIETASFPHMG). Residues 178 to 194 (VSLGIWLWALNSVISNI) traverse the membrane as a helical segment. Residues 195–223 (EFMTMQLWAKPVSKPSKKLEIVTDEIKVD) lie on the Cytoplasmic side of the membrane.

This sequence belongs to the WRB/GET1 family. In terms of assembly, component of the Golgi to ER traffic (GET) complex, which is composed of GET1, GET2 and GET3. Within the complex, GET1 and GET2 form a heterotetramer which is stabilized by phosphatidylinositol binding and which binds to the GET3 homodimer.

The protein localises to the endoplasmic reticulum membrane. It is found in the golgi apparatus membrane. Its function is as follows. Required for the post-translational delivery of tail-anchored (TA) proteins to the endoplasmic reticulum. Together with GET2, acts as a membrane receptor for soluble GET3, which recognizes and selectively binds the transmembrane domain of TA proteins in the cytosol. The GET complex cooperates with the HDEL receptor ERD2 to mediate the ATP-dependent retrieval of resident ER proteins that contain a C-terminal H-D-E-L retention signal from the Golgi to the ER. This Candida glabrata (strain ATCC 2001 / BCRC 20586 / JCM 3761 / NBRC 0622 / NRRL Y-65 / CBS 138) (Yeast) protein is Golgi to ER traffic protein 1.